Reading from the N-terminus, the 127-residue chain is Probable glycine cleavage system H protein (127 aa).

The region spanning 24-106 (TAEVGITAFA…FGDGWMLTVE (83 aa)) is the Lipoyl-binding domain. Lys65 is modified (N6-lipoyllysine).

This sequence belongs to the GcvH family. The glycine cleavage system is composed of four proteins: P, T, L and H. It depends on (R)-lipoate as a cofactor.

Its function is as follows. The glycine cleavage system catalyzes the degradation of glycine. The H protein shuttles the methylamine group of glycine from the P protein to the T protein. The chain is Probable glycine cleavage system H protein from Haloarcula marismortui (strain ATCC 43049 / DSM 3752 / JCM 8966 / VKM B-1809) (Halobacterium marismortui).